Reading from the N-terminus, the 147-residue chain is D-aminoacyl-tRNA deacylase (147 aa).

The Gly-cisPro motif, important for rejection of L-amino acids motif lies at 137 to 138 (GP).

It belongs to the DTD family. As to quaternary structure, homodimer.

The protein resides in the cytoplasm. The enzyme catalyses glycyl-tRNA(Ala) + H2O = tRNA(Ala) + glycine + H(+). It carries out the reaction a D-aminoacyl-tRNA + H2O = a tRNA + a D-alpha-amino acid + H(+). Its function is as follows. An aminoacyl-tRNA editing enzyme that deacylates mischarged D-aminoacyl-tRNAs. Also deacylates mischarged glycyl-tRNA(Ala), protecting cells against glycine mischarging by AlaRS. Acts via tRNA-based rather than protein-based catalysis; rejects L-amino acids rather than detecting D-amino acids in the active site. By recycling D-aminoacyl-tRNA to D-amino acids and free tRNA molecules, this enzyme counteracts the toxicity associated with the formation of D-aminoacyl-tRNA entities in vivo and helps enforce protein L-homochirality. The polypeptide is D-aminoacyl-tRNA deacylase (Acinetobacter baumannii (strain ACICU)).